A 77-amino-acid polypeptide reads, in one-letter code: Fungal protease inhibitor F (77 aa).

The signal sequence occupies residues 1 to 22; it reads MASKNLFVLFFIFALFAANIAA. 4 cysteine pairs are disulfide-bonded: Cys-25/Cys-57, Cys-36/Cys-49, Cys-40/Cys-77, and Cys-59/Cys-71.

The protein belongs to the protease inhibitor I40 family. In terms of tissue distribution, hemolymph.

The protein resides in the secreted. Functionally, highly specific for fungal protease and subtilisin. The polypeptide is Fungal protease inhibitor F (Bombyx mori (Silk moth)).